Consider the following 404-residue polypeptide: Cysteine desulfurase IscS (404 aa).

Pyridoxal 5'-phosphate is bound by residues 75 to 76 (AT), N155, Q183, and 203 to 205 (SAH). K206 carries the post-translational modification N6-(pyridoxal phosphate)lysine. T243 lines the pyridoxal 5'-phosphate pocket. The active-site Cysteine persulfide intermediate is C328. C328 serves as a coordination point for [2Fe-2S] cluster.

It belongs to the class-V pyridoxal-phosphate-dependent aminotransferase family. NifS/IscS subfamily. Homodimer. Forms a heterotetramer with IscU, interacts with other sulfur acceptors. Requires pyridoxal 5'-phosphate as cofactor.

Its subcellular location is the cytoplasm. The catalysed reaction is (sulfur carrier)-H + L-cysteine = (sulfur carrier)-SH + L-alanine. Its pathway is cofactor biosynthesis; iron-sulfur cluster biosynthesis. Functionally, master enzyme that delivers sulfur to a number of partners involved in Fe-S cluster assembly, tRNA modification or cofactor biosynthesis. Catalyzes the removal of elemental sulfur atoms from cysteine to produce alanine. Functions as a sulfur delivery protein for Fe-S cluster synthesis onto IscU, an Fe-S scaffold assembly protein, as well as other S acceptor proteins. This chain is Cysteine desulfurase IscS, found in Aeromonas hydrophila subsp. hydrophila (strain ATCC 7966 / DSM 30187 / BCRC 13018 / CCUG 14551 / JCM 1027 / KCTC 2358 / NCIMB 9240 / NCTC 8049).